A 137-amino-acid polypeptide reads, in one-letter code: Pro-corazonin (137 aa).

Positions methionine 1–alanine 20 are cleaved as a signal peptide. A Pyrrolidone carboxylic acid modification is found at glutamine 21. The residue at position 31 (asparagine 31) is an Asparagine amide. A propeptide spanning residues phenylalanine 68–leucine 137 is cleaved from the precursor.

It belongs to the corazonin family.

The protein localises to the secreted. In terms of biological role, cardioactive peptide. Corazonin is probably involved in the physiological regulation of the heart beat. In Aedes aegypti (Yellowfever mosquito), this protein is Pro-corazonin.